A 155-amino-acid chain; its full sequence is Nascent polypeptide-associated complex subunit beta (155 aa).

2 disordered regions span residues 1 to 39 and 122 to 155; these read MDQA…DDKK and QNMQ…SKVE. Basic residues predominate over residues 21 to 31; the sequence is TPRRKTKKVHK. In terms of domain architecture, NAC-A/B spans 34–99; it reads GTDDKKLQTS…GEEKELTELV (66 aa). A compositionally biased stretch (basic and acidic residues) spans 125–135; that stretch reads QKKEGEAKKEG.

The protein belongs to the NAC-beta family. As to quaternary structure, part of the nascent polypeptide-associated complex (NAC), consisting of EGD2 and EGD1. NAC associates with ribosomes via EGD1.

It is found in the cytoplasm. The protein localises to the nucleus. Its function is as follows. Component of the nascent polypeptide-associated complex (NAC), a dynamic component of the ribosomal exit tunnel, protecting the emerging polypeptides from interaction with other cytoplasmic proteins to ensure appropriate nascent protein targeting. The NAC complex also promotes mitochondrial protein import by enhancing productive ribosome interactions with the outer mitochondrial membrane and blocks the inappropriate interaction of ribosomes translating non-secretory nascent polypeptides with translocation sites in the membrane of the endoplasmic reticulum. EGD1 may act as a transcription factor that exert a negative effect on the expression of several genes that are transcribed by RNA polymerase II. This chain is Nascent polypeptide-associated complex subunit beta (EGD1), found in Coccidioides immitis (strain RS) (Valley fever fungus).